A 473-amino-acid polypeptide reads, in one-letter code: Serine palmitoyltransferase 1 (473 aa).

Residues 1–15 are Lumenal-facing; it reads MATATEQWVLVEMVQ. Positions 1 to 66 are interaction with SPTLC2; sequence MATATEQWVL…KEELIEEWQP (66 aa). Residues 16–36 form a helical membrane-spanning segment; that stretch reads ALYEAPAYHLILEGILILWII. The Cytoplasmic segment spans residues 37–473; it reads RLLFSKTYKL…IKEVAQAVLL (437 aa). Y164 bears the Phosphotyrosine; by ABL mark.

The protein belongs to the class-II pyridoxal-phosphate-dependent aminotransferase family. In terms of assembly, component of the serine palmitoyltransferase (SPT) complex, which is also composed of SPTLC2 or SPTLC3 and SPTSSA or SPTSSB. The heterodimer with SPTLC2 or SPTLC3 forms the catalytic core of the enzyme, while SPTSSA or SPTSSB subunits determine substrate specificity. SPT also interacts with ORMDL proteins, especially ORMDL3, which negatively regulate SPT activity in the presence of ceramides. Forms dimers of heterodimers with SPTLC2. Interacts with RTN4. The cofactor is pyridoxal 5'-phosphate. In terms of processing, phosphorylation at Tyr-164 inhibits activity and promotes cell survival.

It is found in the endoplasmic reticulum membrane. The enzyme catalyses L-serine + hexadecanoyl-CoA + H(+) = 3-oxosphinganine + CO2 + CoA. It catalyses the reaction octadecanoyl-CoA + L-serine + H(+) = 3-oxoeicosasphinganine + CO2 + CoA. The catalysed reaction is tetradecanoyl-CoA + L-serine + H(+) = 3-oxohexadecasphinganine + CO2 + CoA. It carries out the reaction dodecanoyl-CoA + L-serine + H(+) = 3-oxotetradecasphinganine + CO2 + CoA. It participates in lipid metabolism; sphingolipid metabolism. With respect to regulation, SPT complex catalytic activity is negatively regulated by ORMDL proteins, including ORMDL3, in the presence of ceramides. This mechanism allows to maintain ceramide levels at sufficient concentrations for the production of complex sphingolipids, but which prevents the accumulation of ceramides to levels that trigger apoptosis. Component of the serine palmitoyltransferase multisubunit enzyme (SPT) that catalyzes the initial and rate-limiting step in sphingolipid biosynthesis by condensing L-serine and activated acyl-CoA (most commonly palmitoyl-CoA) to form long-chain bases. The SPT complex is also composed of SPTLC2 or SPTLC3 and SPTSSA or SPTSSB. Within this complex, the heterodimer with SPTLC2 or SPTLC3 forms the catalytic core. The composition of the serine palmitoyltransferase (SPT) complex determines the substrate preference. The SPTLC1-SPTLC2-SPTSSA complex shows a strong preference for C16-CoA substrate, while the SPTLC1-SPTLC3-SPTSSA isozyme uses both C14-CoA and C16-CoA as substrates, with a slight preference for C14-CoA. The SPTLC1-SPTLC2-SPTSSB complex shows a strong preference for C18-CoA substrate, while the SPTLC1-SPTLC3-SPTSSB isozyme displays an ability to use a broader range of acyl-CoAs, without apparent preference. Required for adipocyte cell viability and metabolic homeostasis. This is Serine palmitoyltransferase 1 (SPTLC1) from Macaca fascicularis (Crab-eating macaque).